The chain runs to 238 residues: Cysteine-rich venom protein kaouthin-2 (238 aa).

A signal peptide spans 1–19 (MIAFIVLLSLAAVLQQSSG). Positions 20–25 (TVDFAS) are excised as a propeptide. The 127-residue stretch at 38–164 (VDKHNALRRS…SSKYLYVCQY (127 aa)) folds into the SCP domain. Cystine bridges form between cysteine 75–cysteine 153, cysteine 92–cysteine 165, cysteine 148–cysteine 162, cysteine 184–cysteine 191, cysteine 187–cysteine 196, cysteine 200–cysteine 233, cysteine 209–cysteine 227, and cysteine 218–cysteine 231. The ShKT domain maps to 200 to 233 (CKHHNVFSNCQSLAKQNACQTEWMKSKCAASCFC).

As to expression, expressed by the venom gland.

The protein resides in the secreted. The protein is Cysteine-rich venom protein kaouthin-2 of Naja kaouthia (Monocled cobra).